The following is a 184-amino-acid chain: UPF0301 protein ABSDF3201 (184 aa).

Belongs to the UPF0301 (AlgH) family.

The chain is UPF0301 protein ABSDF3201 from Acinetobacter baumannii (strain SDF).